We begin with the raw amino-acid sequence, 269 residues long: uncharacterized protein (269 aa).

Residues G12–S19 and G130–S137 contribute to the ATP site.

The protein to M.jannaschii MJ0578.

This is an uncharacterized protein from Methanocaldococcus jannaschii (strain ATCC 43067 / DSM 2661 / JAL-1 / JCM 10045 / NBRC 100440) (Methanococcus jannaschii).